Reading from the N-terminus, the 252-residue chain is MIKKRIIPCLDVKDGRVVKGIQFKGLRDIGNPVDLAIYYNEAGADELVFLDISKTEEGHSLMLEVIEQTASRLFIPLTVGGGIQSLDDITQLLNHGADKVSLNSSALKNPQLIKQASDKFGRQCICIAIDSYYDPERKAHYCCTHGGKKMTNIKVYDWVQQVEQLGAGELLVTSMGHDGMKQGFDIEHLAKIKSLVNIPIIASGGGGNAQHFVELFNQTDVSAGLAASILHDRETTVQSIKEVIRQGGIAVR.

Active-site residues include Asp11 and Asp130.

This sequence belongs to the HisA/HisF family. Heterodimer of HisH and HisF.

Its subcellular location is the cytoplasm. It catalyses the reaction 5-[(5-phospho-1-deoxy-D-ribulos-1-ylimino)methylamino]-1-(5-phospho-beta-D-ribosyl)imidazole-4-carboxamide + L-glutamine = D-erythro-1-(imidazol-4-yl)glycerol 3-phosphate + 5-amino-1-(5-phospho-beta-D-ribosyl)imidazole-4-carboxamide + L-glutamate + H(+). It functions in the pathway amino-acid biosynthesis; L-histidine biosynthesis; L-histidine from 5-phospho-alpha-D-ribose 1-diphosphate: step 5/9. IGPS catalyzes the conversion of PRFAR and glutamine to IGP, AICAR and glutamate. The HisF subunit catalyzes the cyclization activity that produces IGP and AICAR from PRFAR using the ammonia provided by the HisH subunit. The polypeptide is Imidazole glycerol phosphate synthase subunit HisF (Staphylococcus aureus (strain Mu3 / ATCC 700698)).